The chain runs to 78 residues: Small integral membrane protein 1 (78 aa).

Met1 is subject to N-acetylmethionine. Residues 1–22 form a disordered region; that stretch reads MQSQESGVHYSRWDSSSRDEVS. Topologically, residues 1–48 are cytoplasmic; the sequence is MQSQESGVHYSRWDSSSRDEVSMTAMSSSEEASCYRRISQKLCSGKLG. Residues Ser6, Ser17, Ser22, and Ser27 each carry the phosphoserine modification. Residues 11–21 show a composition bias toward basic and acidic residues; it reads SRWDSSSRDEV. The chain crosses the membrane as a helical; Signal-anchor for type II membrane protein span at residues 49 to 69; it reads IAMKVLGGVALFWIIFILGYI. Over 70–78 the chain is Extracellular; that stretch reads TGYYVHKCK.

The protein belongs to the SMIM1 family. In terms of assembly, homooligomer; disulfide-linked.

It is found in the cell membrane. Regulator of red blood cell formation. In Mus musculus (Mouse), this protein is Small integral membrane protein 1.